The primary structure comprises 429 residues: Putative chloride channel protein ClcB-like (429 aa).

A run of 11 helical transmembrane segments spans residues Met1 to Glu21, Leu44 to Leu64, Leu146 to Gly166, Val168 to Val188, Phe200 to Val220, Leu221 to Ile241, Leu259 to Asn279, Val283 to Cys303, Gly315 to Tyr335, Ala354 to Ile376, and Tyr383 to Ala405.

It belongs to the chloride channel (TC 2.A.49) family. ClcB subfamily.

The protein localises to the cell inner membrane. In Ralstonia nicotianae (strain ATCC BAA-1114 / GMI1000) (Ralstonia solanacearum), this protein is Putative chloride channel protein ClcB-like.